The chain runs to 309 residues: L-lactate dehydrogenase 2 (309 aa).

NAD(+)-binding positions include Val16, Asp37, Tyr67, and 81–82 (GV). A substrate-binding site is contributed by Arg90. Ser103 provides a ligand contact to NAD(+). 122–125 (NPVD) contacts substrate. Thr145 serves as a coordination point for NAD(+). 150-153 (DTAR) lines the substrate pocket. His177 (proton acceptor) is an active-site residue. Thr227 is a substrate binding site.

It belongs to the LDH/MDH superfamily. LDH family. In terms of assembly, homotetramer.

Its subcellular location is the cytoplasm. It catalyses the reaction (S)-lactate + NAD(+) = pyruvate + NADH + H(+). It functions in the pathway fermentation; pyruvate fermentation to lactate; (S)-lactate from pyruvate: step 1/1. Functionally, catalyzes the conversion of lactate to pyruvate. This chain is L-lactate dehydrogenase 2, found in Lactiplantibacillus plantarum (strain ATCC BAA-793 / NCIMB 8826 / WCFS1) (Lactobacillus plantarum).